A 481-amino-acid polypeptide reads, in one-letter code: Proline--tRNA ligase (481 aa).

It belongs to the class-II aminoacyl-tRNA synthetase family. ProS type 3 subfamily. In terms of assembly, homodimer.

It localises to the cytoplasm. It carries out the reaction tRNA(Pro) + L-proline + ATP = L-prolyl-tRNA(Pro) + AMP + diphosphate. Catalyzes the attachment of proline to tRNA(Pro) in a two-step reaction: proline is first activated by ATP to form Pro-AMP and then transferred to the acceptor end of tRNA(Pro). This is Proline--tRNA ligase from Chlorobaculum tepidum (strain ATCC 49652 / DSM 12025 / NBRC 103806 / TLS) (Chlorobium tepidum).